A 344-amino-acid chain; its full sequence is Sensor histidine kinase GraS (344 aa).

2 helical membrane passes run 18-38 and 43-63; these read IFWI…DYDI and IGFI…FTFL. A Histidine kinase domain is found at 126–332; it reads EFVHDIKTPV…TFVLTFPKQN (207 aa). His129 is modified (phosphohistidine; by autocatalysis).

In terms of processing, autophosphorylated.

It localises to the cell membrane. It carries out the reaction ATP + protein L-histidine = ADP + protein N-phospho-L-histidine.. In terms of biological role, member of the two-component regulatory system GraR/GraS involved in resistance against cationic antimicrobial peptides (CAMPs). GraS probably functions as a sensor protein kinase which is autophosphorylated at a histidine residue and transfers its phosphate group to GraR. This Staphylococcus haemolyticus (strain JCSC1435) protein is Sensor histidine kinase GraS (graS).